Here is a 658-residue protein sequence, read N- to C-terminus: Pentatricopeptide repeat-containing protein 7, mitochondrial (658 aa).

The N-terminal 29 residues, 1 to 29 (MRNCVSPLLFAWTKHLRLREFKIPFPNRL), are a transit peptide targeting the mitochondrion. 2 PPR repeats span residues 130–164 (VKKR…TPIW) and 220–254 (LYVE…SESL).

Its subcellular location is the mitochondrion. Its function is as follows. Mitochondrial RNA-binding protein required for the stability of the atp6 mRNA. This Schizosaccharomyces pombe (strain 972 / ATCC 24843) (Fission yeast) protein is Pentatricopeptide repeat-containing protein 7, mitochondrial (ppr7).